The primary structure comprises 150 residues: Sulfur-rich protein, serovar D (150 aa).

2 helical membrane passes run 41 to 61 and 67 to 87; these read VGLVVIGLLLVIATLIFLVSA and AIYLVAIPAILGCVNICVGIL.

The protein localises to the membrane. The protein is Sulfur-rich protein, serovar D (srp) of Chlamydia trachomatis serovar D (strain ATCC VR-885 / DSM 19411 / UW-3/Cx).